The following is a 147-amino-acid chain: Immunity protein YxxD (147 aa).

Probably interacts with cognate toxin YxiD but not with other non-cognate toxins. The interaction inhibits the toxic activity of YxiD.

Its subcellular location is the cytoplasm. Functionally, immunity component of one of 6 LXG toxin-immunity modules in this strain. They promote kin selection, mediate competition in biofilms, and drive spatial segregation of different strains, indicating that LXG toxins may help avoid warfare between strains in biofilms. Mediates intercellular competition during biofilm formation; disruption of the operon disadvantages the bacteria, but overexpression of the cognate immunity protein restores growth in competition with wild-type. In situ neutralizes the toxic effect of cognate toxin YxiD. Neutralizes the toxic activity of cognate toxin YxiD upon expression in E.coli. Does not have immunity protein activity on other LXG toxins. The protein is Immunity protein YxxD (yxxD) of Bacillus subtilis (strain 168).